Consider the following 255-residue polypeptide: tRNA (guanine-N(7)-)-methyltransferase (255 aa).

Positions 64, 89, 116, and 138 each coordinate S-adenosyl-L-methionine. The active site involves aspartate 138. Substrate-binding positions include lysine 142, aspartate 174, and 212–215; that span reads TRYE.

This sequence belongs to the class I-like SAM-binding methyltransferase superfamily. TrmB family.

It catalyses the reaction guanosine(46) in tRNA + S-adenosyl-L-methionine = N(7)-methylguanosine(46) in tRNA + S-adenosyl-L-homocysteine. Its pathway is tRNA modification; N(7)-methylguanine-tRNA biosynthesis. Catalyzes the formation of N(7)-methylguanine at position 46 (m7G46) in tRNA. The protein is tRNA (guanine-N(7)-)-methyltransferase of Rhodospirillum rubrum (strain ATCC 11170 / ATH 1.1.1 / DSM 467 / LMG 4362 / NCIMB 8255 / S1).